Consider the following 677-residue polypeptide: DNA ligase (677 aa).

NAD(+)-binding positions include 35-39 (DAEFD), 85-86 (SL), and glutamate 110. Lysine 112 acts as the N6-AMP-lysine intermediate in catalysis. The NAD(+) site is built by arginine 133 and glutamate 173. The tract at residues 189–210 (QKEGGKPFANPRNAAAGSLRQK) is disordered. The NAD(+) site is built by lysine 289 and lysine 313. Zn(2+) contacts are provided by cysteine 407, cysteine 410, cysteine 426, and cysteine 432. The 82-residue stretch at 596–677 (IPDQVLEGLT…FKQLLANGTV (82 aa)) folds into the BRCT domain.

This sequence belongs to the NAD-dependent DNA ligase family. LigA subfamily. The cofactor is Mg(2+). Requires Mn(2+) as cofactor.

The enzyme catalyses NAD(+) + (deoxyribonucleotide)n-3'-hydroxyl + 5'-phospho-(deoxyribonucleotide)m = (deoxyribonucleotide)n+m + AMP + beta-nicotinamide D-nucleotide.. Functionally, DNA ligase that catalyzes the formation of phosphodiester linkages between 5'-phosphoryl and 3'-hydroxyl groups in double-stranded DNA using NAD as a coenzyme and as the energy source for the reaction. It is essential for DNA replication and repair of damaged DNA. The polypeptide is DNA ligase (Corynebacterium diphtheriae (strain ATCC 700971 / NCTC 13129 / Biotype gravis)).